The primary structure comprises 403 residues: Acetate kinase (403 aa).

Residue Asn-7 participates in Mg(2+) binding. Lys-14 is a binding site for ATP. Arg-95 lines the substrate pocket. Residue Asp-152 is the Proton donor/acceptor of the active site. Residues 212-216, 286-288, and 335-339 contribute to the ATP site; these read HLGNG, DMR, and GIGEN. Glu-389 provides a ligand contact to Mg(2+).

Belongs to the acetokinase family. As to quaternary structure, homodimer. Requires Mg(2+) as cofactor. Mn(2+) serves as cofactor.

The protein resides in the cytoplasm. It catalyses the reaction acetate + ATP = acetyl phosphate + ADP. It functions in the pathway metabolic intermediate biosynthesis; acetyl-CoA biosynthesis; acetyl-CoA from acetate: step 1/2. Catalyzes the formation of acetyl phosphate from acetate and ATP. Can also catalyze the reverse reaction. In Desulfovibrio desulfuricans (strain ATCC 27774 / DSM 6949 / MB), this protein is Acetate kinase.